A 144-amino-acid chain; its full sequence is Monooxygenase ptaG (144 aa).

This sequence belongs to the avfA family.

It functions in the pathway secondary metabolite biosynthesis. Its function is as follows. Monooxygenase; part of the gene cluster that mediates the biosynthesis of pestheic acid, a diphenyl ether which is a biosynthetic precursor of the unique chloropupukeananes. The biosynthesis initiates from condensation of acetate and malonate units catalyzed by the non-reducing PKS ptaA. As the ptaA protein is TE/CLC domain-deficient, hydrolysis and Claisen cyclization of the polyketide could be catalyzed by ptaB containing a beta-lactamase domain. The ptaB protein might hydrolyze the thioester bond between the ACP of ptaA and the intermediate to release atrochrysone carboxylic acid, which is spontaneously dehydrated to form endocrocin anthrone. Endocrocin anthrone is then converted to endocrocin, catalyzed by the anthrone oxygenase ptaC. Spontaneous decarboxylation of endocrocin occurs to generate emodin. An O-methyltransferase (ptaH or ptaI) could methylate emodin to form physcion. PtaJ could then catalyze the oxidative cleavage of physcion, and rotation of the intermediate could then afford desmethylisosulochrin. PtaF, a putative NADH-dependent oxidoreductase, might also participate in the oxidative cleavage step. Desmethylisosulochrin is then transformed by another O-methyltransferase (ptaH or ptaI) to form isosulochrin. Chlorination of isosulochrin by ptaM in the cyclohexadienone B ring then produces chloroisosulochrin. PtaE is responsible for the oxidative coupling reactions of both benzophenones isosulochrin and chloroisosulochrin to RES-1214-1 and pestheic acid respectively, regardless of chlorination. This Pestalotiopsis fici (strain W106-1 / CGMCC3.15140) protein is Monooxygenase ptaG.